Consider the following 361-residue polypeptide: Hydroxycarboxylate dehydrogenase B (361 aa).

Residues H48, 122-124 (GRI), 178-182 (LLDYA), H234, N270, and 313-316 (GEWE) each bind NAD(+).

This sequence belongs to the LDH2/MDH2 oxidoreductase family.

The catalysed reaction is 2-hydroxyglutarate + NADP(+) = 2-oxoglutarate + NADPH + H(+). The enzyme catalyses 2-hydroxyglutarate + NAD(+) = 2-oxoglutarate + NADH + H(+). It carries out the reaction 3-phenyllactate + NADP(+) = 3-phenylpyruvate + NADPH + H(+). It catalyses the reaction 3-phenyllactate + NAD(+) = 3-phenylpyruvate + NADH + H(+). The catalysed reaction is (2R)-2-hydroxy-3-(4-hydroxyphenyl)propanoate + NAD(+) = 3-(4-hydroxyphenyl)pyruvate + NADH + H(+). The enzyme catalyses (2R)-2-hydroxy-3-(4-hydroxyphenyl)propanoate + NADP(+) = 3-(4-hydroxyphenyl)pyruvate + NADPH + H(+). It carries out the reaction (2R)-3-(3,4-dihydroxyphenyl)lactate + NADP(+) = 3-(3,4-dihydroxyphenyl)pyruvate + NADPH + H(+). It catalyses the reaction (2R)-3-(3,4-dihydroxyphenyl)lactate + NAD(+) = 3-(3,4-dihydroxyphenyl)pyruvate + NADH + H(+). Functionally, catalyzes the NAD(P)H-dependent reduction of 2-oxoglutarate, phenylpyruvate and (4-hydroxyphenyl)pyruvate, leading to the respective 2-hydroxycarboxylate in vitro. Shows a preference for NADPH over NADH as a redox partner. Do not catalyze the reverse reactions. In Escherichia coli (strain K12), this protein is Hydroxycarboxylate dehydrogenase B.